The chain runs to 132 residues: Transmembrane protein 170B (132 aa).

The Extracellular segment spans residues 1 to 37; that stretch reads MKAEGGDHSMINLSVQQVLSLWAHGTVLRNLTEMWYW. N12 carries an N-linked (GlcNAc...) asparagine glycan. A helical transmembrane segment spans residues 38-58; sequence IFLWALFSSLFVHGAAGVLMF. Over 59–68 the chain is Cytoplasmic; that stretch reads VMLQRHRQGR. A helical membrane pass occupies residues 69–89; that stretch reads VISVIAVSIGFLASVTGAMIT. Topologically, residues 90-104 are extracellular; sequence SAAVAGIYRVAGKNM. The chain crosses the membrane as a helical span at residues 105–125; the sequence is APLEALVWGVGQTVLTLIISF. The Cytoplasmic portion of the chain corresponds to 126 to 132; the sequence is SRILATL.

Belongs to the TMEM170 family. As to quaternary structure, interacts with CTNNB1. Expressed in normal breast tissues. Down-regulated in breast cancer cells (at protein level).

It localises to the cell membrane. Functionally, negatively regulates the canonical Wnt signaling in breast cancer cells. Exerts an inhibitory effect on breast cancer growth by inhibiting CTNNB1 stabilization and nucleus translocation, which reduces the activity of Wnt targets. The polypeptide is Transmembrane protein 170B (TMEM170B) (Homo sapiens (Human)).